The following is a 226-amino-acid chain: Probable chemoreceptor glutamine deamidase CheD (226 aa).

Belongs to the CheD family.

It carries out the reaction L-glutaminyl-[protein] + H2O = L-glutamyl-[protein] + NH4(+). In terms of biological role, probably deamidates glutamine residues to glutamate on methyl-accepting chemotaxis receptors (MCPs), playing an important role in chemotaxis. In Bordetella avium (strain 197N), this protein is Probable chemoreceptor glutamine deamidase CheD.